The chain runs to 45 residues: Protein PsbN (45 aa).

A helical transmembrane segment spans residues 12-30; the sequence is FLSRSLVSFTGYALYTAFG.

Belongs to the PsbN family.

The protein localises to the plastid. It is found in the chloroplast thylakoid membrane. In terms of biological role, may play a role in photosystem I and II biogenesis. This chain is Protein PsbN, found in Adiantum capillus-veneris (Maidenhair fern).